A 305-amino-acid chain; its full sequence is Tyrosine recombinase XerD (305 aa).

The 86-residue stretch at 3–88 (PADASVIERF…TLRAFYGLCL (86 aa)) folds into the Core-binding (CB) domain. The Tyr recombinase domain maps to 109–299 (SLPKALTESQ…ARQHLQKLHA (191 aa)). Residues arginine 149, lysine 173, histidine 251, arginine 254, and histidine 277 contribute to the active site. Tyrosine 286 functions as the O-(3'-phospho-DNA)-tyrosine intermediate in the catalytic mechanism.

This sequence belongs to the 'phage' integrase family. XerD subfamily. Forms a cyclic heterotetrameric complex composed of two molecules of XerC and two molecules of XerD.

It is found in the cytoplasm. Its function is as follows. Site-specific tyrosine recombinase, which acts by catalyzing the cutting and rejoining of the recombining DNA molecules. The XerC-XerD complex is essential to convert dimers of the bacterial chromosome into monomers to permit their segregation at cell division. It also contributes to the segregational stability of plasmids. The polypeptide is Tyrosine recombinase XerD (Xanthomonas axonopodis pv. citri (strain 306)).